The primary structure comprises 616 residues: MAU2 chromatid cohesion factor homolog (616 aa).

TPR repeat units follow at residues 90–123, 445–478, and 485–518; these read FDTA…SQHN, GSFY…ANAE, and SCSL…ASKI.

The protein belongs to the SCC4/mau-2 family. In terms of assembly, component of the cohesin loading complex.

The protein resides in the nucleus. Its subcellular location is the nucleoplasm. Required for association of the cohesin complex with chromatin during interphase. Plays a role in sister chromatid cohesion and normal progression through prometaphase. This chain is MAU2 chromatid cohesion factor homolog, found in Culex quinquefasciatus (Southern house mosquito).